A 153-amino-acid polypeptide reads, in one-letter code: Large ribosomal subunit protein uL15 (153 aa).

The segment at 1 to 48 (MRLNELSPAPGSKKDRKRVGRGDAGRGNYSGRGMKGQKARSGGATRPG) is disordered.

Belongs to the universal ribosomal protein uL15 family. Part of the 50S ribosomal subunit.

Functionally, binds to the 23S rRNA. The polypeptide is Large ribosomal subunit protein uL15 (Dehalococcoides mccartyi (strain ATCC BAA-2266 / KCTC 15142 / 195) (Dehalococcoides ethenogenes (strain 195))).